Consider the following 200-residue polypeptide: dTTP/UTP pyrophosphatase (200 aa).

D81 acts as the Proton acceptor in catalysis.

This sequence belongs to the Maf family. YhdE subfamily. A divalent metal cation serves as cofactor.

It is found in the cytoplasm. The enzyme catalyses dTTP + H2O = dTMP + diphosphate + H(+). It carries out the reaction UTP + H2O = UMP + diphosphate + H(+). Nucleoside triphosphate pyrophosphatase that hydrolyzes dTTP and UTP. May have a dual role in cell division arrest and in preventing the incorporation of modified nucleotides into cellular nucleic acids. The polypeptide is dTTP/UTP pyrophosphatase (Cupriavidus pinatubonensis (strain JMP 134 / LMG 1197) (Cupriavidus necator (strain JMP 134))).